The chain runs to 312 residues: Olfactory receptor-like protein COR5 (312 aa).

Over 1–26 (MALGNCTTPTTFILSGLTDNPRLQMP) the chain is Extracellular. N-linked (GlcNAc...) asparagine glycosylation occurs at asparagine 5. Residues 27-49 (LFMVFLAIYTITLLANLGLIALI) traverse the membrane as a helical segment. Over 50-57 (SVDFHLQT) the chain is Cytoplasmic. The helical transmembrane segment at 58–79 (PMYIFLQNLSFTDAAYSTVITP) threads the bilayer. Residues 80 to 100 (KMLATFLEERRTISYVGCILQ) lie on the Extracellular side of the membrane. Cysteine 97 and cysteine 179 are oxidised to a cystine. The helical transmembrane segment at 101-120 (YFSFVLLTSSECLLLAVMAY) threads the bilayer. The Cytoplasmic portion of the chain corresponds to 121-139 (DRYVAICKPLLYPAIMTKA). Residues 140–164 (VCWRLVEGLYSLAFLNSLVHTSGLL) traverse the membrane as a helical segment. At 165–205 (KLSFCSSNVVNHFFCDNSPLFQISSSSTTLNELLVFIFGSW) the chain is on the extracellular side. The helical transmembrane segment at 206–226 (FAMSSIITTPISYVFIILTVV) threads the bilayer. Residues 227–239 (RIRSKDGKYKAFS) are Cytoplasmic-facing. A helical transmembrane segment spans residues 240–260 (TCTSHLMAVSLFHGTVIFMYL). Residues 261–271 (RPVKLFSLDTD) are Extracellular-facing. Residues 272–292 (KIASLFYTVVIPMLNPLIYSW) form a helical membrane-spanning segment. Residues 293–312 (RNKEVKDALRRVIATNVWIH) lie on the Cytoplasmic side of the membrane.

It belongs to the G-protein coupled receptor 1 family.

The protein resides in the cell membrane. Its function is as follows. Odorant receptor. The polypeptide is Olfactory receptor-like protein COR5 (COR5) (Gallus gallus (Chicken)).